The primary structure comprises 1450 residues: M-protein, striated muscle (1450 aa).

The interval 66–87 (AHEAMQESRKRTHEQKSHASDE) is disordered. Ig-like C2-type domains are found at residues 142-233 (PEIL…CAVV) and 254-359 (PLSY…AFLF). Fibronectin type-III domains lie at 373-468 (APMD…ALDP), 501-596 (PPTN…PQDI), 602-695 (APGR…VQAA), 698-800 (CPSY…TMPE), and 803-900 (PAYD…ASPG). Ig-like C2-type domains follow at residues 899-995 (PGTK…LMTL), 1002-1115 (PTIP…FLRK), 1118-1204 (PHFS…LELS), 1225-1322 (PLKI…QRLK), and 1333-1422 (KVIG…VTVS).

Expressed in pectoralis and cardiac muscle.

In terms of biological role, is a structural constituent of myofibrillar M-band in striated muscle. This is M-protein, striated muscle from Gallus gallus (Chicken).